The primary structure comprises 258 residues: Retron Ec83 putative HNH endonuclease (258 aa).

Functionally, putative HNH endonuclease component of antiviral defense system retron Ec83, composed of a non-coding RNA (ncRNA), a reverse transcriptase (RT), a probable ATPase and this protein. Expression of retron Ec78 confers protection against bacteriophage T2, T4 and T6. At multiplicity of infection (MOI) of 0.02 cultures slow growth when infected with T4 but do not collapse, at MOI 2 cultures enter growth stasis. This Escherichia coli protein is Retron Ec83 putative HNH endonuclease.